Reading from the N-terminus, the 100-residue chain is Large ribosomal subunit protein bL21 (100 aa).

The protein belongs to the bacterial ribosomal protein bL21 family. As to quaternary structure, part of the 50S ribosomal subunit. Contacts protein L20.

This protein binds to 23S rRNA in the presence of protein L20. The polypeptide is Large ribosomal subunit protein bL21 (Wolbachia sp. subsp. Brugia malayi (strain TRS)).